A 180-amino-acid polypeptide reads, in one-letter code: Small ribosomal subunit protein uS5 (180 aa).

The disordered stretch occupies residues 1 to 26; the sequence is MAEEKDKKQSSRRRNNRRTEKESEWQ. The span at 17-26 shows a compositional bias: basic and acidic residues; sequence RRTEKESEWQ. Positions 25 to 88 constitute an S5 DRBM domain; it reads WQERVVQIRR…ADGKKHLVNV (64 aa).

Belongs to the universal ribosomal protein uS5 family. As to quaternary structure, part of the 30S ribosomal subunit. Contacts proteins S4 and S8.

In terms of biological role, with S4 and S12 plays an important role in translational accuracy. Functionally, located at the back of the 30S subunit body where it stabilizes the conformation of the head with respect to the body. This chain is Small ribosomal subunit protein uS5, found in Synechococcus elongatus (strain ATCC 33912 / PCC 7942 / FACHB-805) (Anacystis nidulans R2).